A 180-amino-acid polypeptide reads, in one-letter code: ATP-dependent protease subunit HslV (180 aa).

Residue Thr-8 is part of the active site. 3 residues coordinate Na(+): Ser-165, Cys-168, and Thr-171.

The protein belongs to the peptidase T1B family. HslV subfamily. In terms of assembly, a double ring-shaped homohexamer of HslV is capped on each side by a ring-shaped HslU homohexamer. The assembly of the HslU/HslV complex is dependent on binding of ATP.

The protein localises to the cytoplasm. The catalysed reaction is ATP-dependent cleavage of peptide bonds with broad specificity.. Its activity is regulated as follows. Allosterically activated by HslU binding. Functionally, protease subunit of a proteasome-like degradation complex believed to be a general protein degrading machinery. The chain is ATP-dependent protease subunit HslV from Staphylococcus saprophyticus subsp. saprophyticus (strain ATCC 15305 / DSM 20229 / NCIMB 8711 / NCTC 7292 / S-41).